The chain runs to 331 residues: Pectate lyase B (331 aa).

The first 25 residues, 1-25 (MKFTGSPLLWPSWLPLPAPPPPLPS), serve as a signal peptide directing secretion. Asn99 carries an N-linked (GlcNAc...) asparagine glycan. Ca(2+) contacts are provided by Asp139, Asp169, and Asp173. Residue Arg226 is part of the active site.

The protein belongs to the polysaccharide lyase 1 family. The cofactor is Ca(2+).

It localises to the secreted. It catalyses the reaction Eliminative cleavage of (1-&gt;4)-alpha-D-galacturonan to give oligosaccharides with 4-deoxy-alpha-D-galact-4-enuronosyl groups at their non-reducing ends.. It functions in the pathway glycan metabolism; pectin degradation; 2-dehydro-3-deoxy-D-gluconate from pectin: step 2/5. Acts as a virulence factor active in plant tissue maceration. This Colletotrichum gloeosporioides (Anthracnose fungus) protein is Pectate lyase B (PLB).